Reading from the N-terminus, the 760-residue chain is Probable ubiquitin carboxyl-terminal hydrolase creB (760 aa).

Positions 1 to 28 (MGSFLRSFRNNAGSTTPSVGAVPAKKEV) are disordered. Polar residues predominate over residues 8–18 (FRNNAGSTTPS). The USP domain maps to 55–469 (YGMENYGNTC…CAYVLFYQET (415 aa)). Catalysis depends on Cys64, which acts as the Nucleophile. Disordered stretches follow at residues 114–146 (AEAQAEKQRAANAQRPGMPPAQPQKPEDKDSPD) and 242–270 (PAAIEKSLPAPDHAETVDQSASSGSKTPN). Positions 258–270 (VDQSASSGSKTPN) are enriched in polar residues. His420 serves as the catalytic Proton acceptor. A disordered region spans residues 520 to 760 (EEHNRPNGLK…LRKKSFSILS (241 aa)). Residues 575–635 (KSDVQGKKER…AALEASKASK (61 aa)) adopt a coiled-coil conformation. 3 stretches are compositionally biased toward basic and acidic residues: residues 578–626 (VQGK…ELKA), 635–651 (KAQEDRRQSPDHGKDKL), and 708–742 (DPKDDPFQDSHHPNKPMMKEDEQANHKDPKHERTG). Over residues 743-760 (HGKWRSFSLRKKSFSILS) the composition is skewed to basic residues.

This sequence belongs to the peptidase C19 family. Interacts with creA, creC and qutD.

The catalysed reaction is Thiol-dependent hydrolysis of ester, thioester, amide, peptide and isopeptide bonds formed by the C-terminal Gly of ubiquitin (a 76-residue protein attached to proteins as an intracellular targeting signal).. Functionally, ubiquitin thioesterase component of the regulatory network controlling carbon source utilization through ubiquitination and deubiquitination involving creA, creB, creC, creD and acrB. Deubiquitinates the creA catabolic repressor and the quinate permease qutD. Also plays a role in response to carbon starvation and the control of extracellular proteases activity. This Aspergillus clavatus (strain ATCC 1007 / CBS 513.65 / DSM 816 / NCTC 3887 / NRRL 1 / QM 1276 / 107) protein is Probable ubiquitin carboxyl-terminal hydrolase creB (creB).